The following is a 311-amino-acid chain: Malate dehydrogenase (311 aa).

NAD(+) is bound by residues 7 to 12 (GAGNVG) and aspartate 32. Residues arginine 82 and arginine 88 each coordinate substrate. Residues asparagine 95 and 118–120 (VSN) contribute to the NAD(+) site. The substrate site is built by asparagine 120 and arginine 151. Histidine 175 functions as the Proton acceptor in the catalytic mechanism.

Belongs to the LDH/MDH superfamily. MDH type 3 family. In terms of assembly, homotetramer.

It carries out the reaction (S)-malate + NAD(+) = oxaloacetate + NADH + H(+). With respect to regulation, strongly inhibited by iodoacetic acid and CuCl(2). Completely inhibited by N-ethylmaleimide and HgCl(2). Catalyzes the reversible oxidation of malate to oxaloacetate. Can use both NAD and NADP for malate oxidation, but NADPH cannot be used for oxaloacetate reduction. The sequence is that of Malate dehydrogenase from Flavobacterium frigidimaris.